Here is a 428-residue protein sequence, read N- to C-terminus: Dihydroorotase (428 aa).

Residues His-60 and His-62 each coordinate Zn(2+). Substrate is bound by residues 62–64 (HLR) and Asn-94. 3 residues coordinate Zn(2+): Asp-152, His-179, and His-232. Asn-278 contacts substrate. Asp-305 contributes to the Zn(2+) binding site. Residue Asp-305 is part of the active site. Substrate-binding positions include His-309 and 323-324 (FG).

This sequence belongs to the metallo-dependent hydrolases superfamily. DHOase family. Class I DHOase subfamily. Zn(2+) serves as cofactor.

The catalysed reaction is (S)-dihydroorotate + H2O = N-carbamoyl-L-aspartate + H(+). It functions in the pathway pyrimidine metabolism; UMP biosynthesis via de novo pathway; (S)-dihydroorotate from bicarbonate: step 3/3. Its function is as follows. Catalyzes the reversible cyclization of carbamoyl aspartate to dihydroorotate. This chain is Dihydroorotase, found in Anoxybacillus flavithermus (strain DSM 21510 / WK1).